A 296-amino-acid polypeptide reads, in one-letter code: D-alanine--D-alanine ligase (296 aa).

In terms of domain architecture, ATP-grasp spans 103–293 (KEILMHHRMP…FDSFVKRIIE (191 aa)). 129 to 180 (ISFPAAVKPSSGGSSIATFKVKSIQELKHAYEEASKYGEVMIEQWVTGKEIT) contacts ATP. Asp247, Glu260, and Asn262 together coordinate Mg(2+).

The protein belongs to the D-alanine--D-alanine ligase family. Mg(2+) serves as cofactor. Mn(2+) is required as a cofactor.

It is found in the cytoplasm. The catalysed reaction is 2 D-alanine + ATP = D-alanyl-D-alanine + ADP + phosphate + H(+). Its pathway is cell wall biogenesis; peptidoglycan biosynthesis. Functionally, cell wall formation. The polypeptide is D-alanine--D-alanine ligase (Francisella tularensis subsp. holarctica (strain LVS)).